The sequence spans 340 residues: Protein RecA (340 aa).

65-72 (GPESGGKT) is an ATP binding site.

It belongs to the RecA family.

Its subcellular location is the cytoplasm. Can catalyze the hydrolysis of ATP in the presence of single-stranded DNA, the ATP-dependent uptake of single-stranded DNA by duplex DNA, and the ATP-dependent hybridization of homologous single-stranded DNAs. It interacts with LexA causing its activation and leading to its autocatalytic cleavage. The chain is Protein RecA from Thermus thermophilus (strain ATCC BAA-163 / DSM 7039 / HB27).